A 1111-amino-acid polypeptide reads, in one-letter code: Nuclear migration and anchoring protein unc-84 (1111 aa).

At 1–509 (MAPATEADNN…LTDKKSSKFS (509 aa)) the chain is on the nuclear side. Required for nuclear envelope localization stretches follow at residues 118 to 244 (YILR…SQTL) and 503 to 507 (KKSSK). Residues 232 to 253 (ERASRMTTRSQTLERSRKFDGL) form a disordered region. The segment covering 243 to 252 (TLERSRKFDG) has biased composition (basic and acidic residues). The chain crosses the membrane as a helical span at residues 510 to 530 (WCQILGLLLALLFAIFLLGFL). Residues 531–1111 (TSDNTAIRVK…LRVHGKVVQV (581 aa)) are Perinuclear space-facing. The segment at 912–1111 (QYDKNHLEAI…LRVHGKVVQV (200 aa)) is interaction with zyg-12. An SUN domain is found at 945–1109 (GGAVVSTRCS…YRLRVHGKVV (165 aa)).

As to quaternary structure, component of the unc-83-unc-84 LINC complex which contains at least unc-83 and unc-84. Within the unc-83-unc-84 LINC complex interacts (via C-terminus) with unc-83; the interaction is probably required to recruit unc-83 to the nuclear membrane. Most likely interacts with anc-1; the interaction is probably required to recruit anc-1 to the nuclear envelope. Interacts (via C-terminus) with zyg-12 (via C-terminus); the interaction is direct. May interact with lmn-1; this interaction may be required to complete the connection between the nuclear lamina and the cytoskeleton. In terms of tissue distribution, expressed in all somatic cells. Not expressed in germ cells in the mitotic and transition zones of the gonad. One study shows expression at the beginning of the late pachytene stage in the proximal gonad, but there is no expression in the male germline, suggesting expression is specific to oogenesis in hermaphrodites.

It is found in the nucleus inner membrane. The protein localises to the cytoplasm. It localises to the cytoskeleton. In terms of biological role, involved in nuclear migration and anchoring in hypodermal precursor cells. Most likely recruits anc-1 to the nuclear envelope where anc-1 functions to tether the nucleus to the actin cytoskeleton. Component of the unc-83-unc-84 LINC (LInker of Nucleoskeleton and Cytoskeleton) complex where it recruits and interacts with unc-83 to form a bridge connecting the nuclear envelope to the cytoskeleton which allows for nuclear transport along microtubules. Its role in nuclear migration may be in association with lamin, lmn-1. Regulates nuclear migrations in one-cell embryos, controlling the posterior migration of the male pronucleus following fertilization. Not required for centrosome attachment to the nucleus. Plays a role in the maintenance of the nuclear envelope architecture in body wall muscle cells. May be involved in DNA damage repair through an association with zyg-12. Potentially has roles in homologous recombination, double strand break repair and meiotic recombination. Specifically, may in part inhibit non-homologous end joining repair, most likely through recruiting fan-1 to the nucleoplasm, to facilitate the repair of DNA cross-links. This chain is Nuclear migration and anchoring protein unc-84, found in Caenorhabditis elegans.